A 174-amino-acid chain; its full sequence is MAIVGLFYGSDTGNTENIAKQIQKQLGSDLIDIRDIAKSSKEDIEAYDFLLFGIPTWYYGEAQADWDDFFPTLEEIDFTDKLVGIFGCGDQEDYADYFCDAIGTVRDIIEPHGAIVVGNWPTEGYNFEASKALLEDGTFIGLCIDEDRQPELTAERVEKWCKQIYDEMCLAELA.

The 162-residue stretch at 4–165 (VGLFYGSDTG…RVEKWCKQIY (162 aa)) folds into the Flavodoxin-like domain.

The protein belongs to the flavodoxin family. It depends on FMN as a cofactor.

Functionally, low-potential electron donor to a number of redox enzymes. This chain is Flavodoxin (fldA), found in Haemophilus influenzae (strain ATCC 51907 / DSM 11121 / KW20 / Rd).